The chain runs to 278 residues: tRNA uridine(34) hydroxylase (278 aa).

Residues 122–216 form the Rhodanese domain; it reads QDPDVVVIDT…YLETIAPEES (95 aa). Catalysis depends on Cys176, which acts as the Cysteine persulfide intermediate.

Belongs to the TrhO family.

The enzyme catalyses uridine(34) in tRNA + AH2 + O2 = 5-hydroxyuridine(34) in tRNA + A + H2O. Its function is as follows. Catalyzes oxygen-dependent 5-hydroxyuridine (ho5U) modification at position 34 in tRNAs. This chain is tRNA uridine(34) hydroxylase, found in Synechocystis sp. (strain ATCC 27184 / PCC 6803 / Kazusa).